A 252-amino-acid polypeptide reads, in one-letter code: Orotidine 5'-phosphate decarboxylase (252 aa).

Substrate-binding positions include Asp26, Lys48, 75 to 84, Thr135, Arg196, Gln205, Gly225, and Arg226; that span reads DLKFHDIPNT. Residue Lys77 is the Proton donor of the active site.

This sequence belongs to the OMP decarboxylase family. Type 1 subfamily. Homodimer.

The catalysed reaction is orotidine 5'-phosphate + H(+) = UMP + CO2. Its pathway is pyrimidine metabolism; UMP biosynthesis via de novo pathway; UMP from orotate: step 2/2. Functionally, catalyzes the decarboxylation of orotidine 5'-monophosphate (OMP) to uridine 5'-monophosphate (UMP). In Sodalis glossinidius (strain morsitans), this protein is Orotidine 5'-phosphate decarboxylase.